The primary structure comprises 282 residues: Methyltransferase tpcH (282 aa).

It belongs to the class I-like SAM-binding methyltransferase superfamily. In terms of tissue distribution, specifically expressed in conidia.

It participates in secondary metabolite biosynthesis. Its function is as follows. Methyltransferase; part of the gene cluster that mediates the biosynthesis of trypacidin, a mycotoxin with antiprotozoal activity and that plays a role in the infection process. The pathway begins with the synthesis of atrochrysone thioester by the polyketide synthase (PKS) tpcC. The atrochrysone carboxyl ACP thioesterase tpcB then breaks the thioester bond and releases the atrochrysone carboxylic acid from tpcC. The decarboxylase tpcK converts atrochrysone carboxylic acid to atrochrysone which is further reduced into emodin anthrone. The next step is performed by the emodin anthrone oxygenase tpcL that catalyzes the oxidation of emodinanthrone to emodin. Emodin O-methyltransferase encoded by tpcA catalyzes methylation of the 8-hydroxy group of emodin to form questin. Ring cleavage of questin by questin oxidase tpcI leads to desmethylsulochrin via several intermediates including questin epoxide. Another methylation step catalyzed by tpcM leads to the formation of sulochrin which is further converted to monomethylsulfochrin by tpcH. Finally, the tpcJ catalyzes the conversion of monomethylsulfochrin to trypacidin. Trypacidin is toxic for human pulmonary and bronchial epithelial cells by initiating the intracellular formation of nitric oxide (NO) and hydrogen peroxide (H(2)O(2)), thus triggering host necrotic cell death. The trypacidin pathway is also able to produce endocrocin via a distinct route from the endocrocin Enc pathway. The sequence is that of Methyltransferase tpcH from Aspergillus fumigatus (strain ATCC MYA-4609 / CBS 101355 / FGSC A1100 / Af293) (Neosartorya fumigata).